We begin with the raw amino-acid sequence, 148 residues long: Ribonuclease pancreatic (148 aa).

A signal peptide spans 1 to 25; it reads MGLEKSLLLLPLLVLVLGCVQPSLG. Substrate contacts are provided by Lys32 and Arg35. The active-site Proton acceptor is His37. 4 disulfides stabilise this stretch: Cys50/Cys108, Cys64/Cys119, Cys82/Cys134, and Cys89/Cys96. Residues 65 to 69 and Lys90 each bind substrate; that span reads KPVNT. His143 serves as the catalytic Proton donor.

It belongs to the pancreatic ribonuclease family. In terms of assembly, monomer. Interacts with and forms tight 1:1 complexes with RNH1. Dimerization of two such complexes may occur. Interaction with RNH1 inhibits this protein. Pancreas.

It localises to the secreted. It catalyses the reaction an [RNA] containing cytidine + H2O = an [RNA]-3'-cytidine-3'-phosphate + a 5'-hydroxy-ribonucleotide-3'-[RNA].. The catalysed reaction is an [RNA] containing uridine + H2O = an [RNA]-3'-uridine-3'-phosphate + a 5'-hydroxy-ribonucleotide-3'-[RNA].. Endonuclease that catalyzes the cleavage of RNA on the 3' side of pyrimidine nucleotides. Acts on single-stranded and double-stranded RNA. The protein is Ribonuclease pancreatic (RNASE1) of Gerbillus nigeriae (Nigerian gerbil).